Here is a 211-residue protein sequence, read N- to C-terminus: ATP phosphoribosyltransferase (211 aa).

This sequence belongs to the ATP phosphoribosyltransferase family. Short subfamily. As to quaternary structure, heteromultimer composed of HisG and HisZ subunits.

Its subcellular location is the cytoplasm. The enzyme catalyses 1-(5-phospho-beta-D-ribosyl)-ATP + diphosphate = 5-phospho-alpha-D-ribose 1-diphosphate + ATP. The protein operates within amino-acid biosynthesis; L-histidine biosynthesis; L-histidine from 5-phospho-alpha-D-ribose 1-diphosphate: step 1/9. Catalyzes the condensation of ATP and 5-phosphoribose 1-diphosphate to form N'-(5'-phosphoribosyl)-ATP (PR-ATP). Has a crucial role in the pathway because the rate of histidine biosynthesis seems to be controlled primarily by regulation of HisG enzymatic activity. The polypeptide is ATP phosphoribosyltransferase (Pseudomonas putida (strain ATCC 47054 / DSM 6125 / CFBP 8728 / NCIMB 11950 / KT2440)).